The chain runs to 78 residues: Acyl carrier protein (78 aa).

In terms of domain architecture, Carrier spans 4-78 (AQIKEKVYDI…QQAIDYIVKK (75 aa)). Ser-39 carries the post-translational modification O-(pantetheine 4'-phosphoryl)serine.

The protein belongs to the acyl carrier protein (ACP) family. Post-translationally, 4'-phosphopantetheine is transferred from CoA to a specific serine of apo-ACP by AcpS. This modification is essential for activity because fatty acids are bound in thioester linkage to the sulfhydryl of the prosthetic group.

It is found in the cytoplasm. Its pathway is lipid metabolism; fatty acid biosynthesis. In terms of biological role, carrier of the growing fatty acid chain in fatty acid biosynthesis. This is Acyl carrier protein from Chlorobium phaeobacteroides (strain DSM 266 / SMG 266 / 2430).